A 123-amino-acid polypeptide reads, in one-letter code: Small ribosomal subunit protein uS12 (123 aa).

At Asp-89 the chain carries 3-methylthioaspartic acid.

The protein belongs to the universal ribosomal protein uS12 family. In terms of assembly, part of the 30S ribosomal subunit. Contacts proteins S8 and S17. May interact with IF1 in the 30S initiation complex.

Functionally, with S4 and S5 plays an important role in translational accuracy. Interacts with and stabilizes bases of the 16S rRNA that are involved in tRNA selection in the A site and with the mRNA backbone. Located at the interface of the 30S and 50S subunits, it traverses the body of the 30S subunit contacting proteins on the other side and probably holding the rRNA structure together. The combined cluster of proteins S8, S12 and S17 appears to hold together the shoulder and platform of the 30S subunit. The chain is Small ribosomal subunit protein uS12 from Geotalea uraniireducens (strain Rf4) (Geobacter uraniireducens).